A 417-amino-acid chain; its full sequence is NADH-quinone oxidoreductase subunit D (417 aa).

This sequence belongs to the complex I 49 kDa subunit family. As to quaternary structure, NDH-1 is composed of 14 different subunits. Subunits NuoB, C, D, E, F, and G constitute the peripheral sector of the complex.

The protein localises to the cell inner membrane. It catalyses the reaction a quinone + NADH + 5 H(+)(in) = a quinol + NAD(+) + 4 H(+)(out). In terms of biological role, NDH-1 shuttles electrons from NADH, via FMN and iron-sulfur (Fe-S) centers, to quinones in the respiratory chain. The immediate electron acceptor for the enzyme in this species is believed to be ubiquinone. Couples the redox reaction to proton translocation (for every two electrons transferred, four hydrogen ions are translocated across the cytoplasmic membrane), and thus conserves the redox energy in a proton gradient. In Cupriavidus taiwanensis (strain DSM 17343 / BCRC 17206 / CCUG 44338 / CIP 107171 / LMG 19424 / R1) (Ralstonia taiwanensis (strain LMG 19424)), this protein is NADH-quinone oxidoreductase subunit D.